The following is a 241-amino-acid chain: Probable transcriptional regulatory protein NE0210 (241 aa).

The protein belongs to the TACO1 family.

It localises to the cytoplasm. The chain is Probable transcriptional regulatory protein NE0210 from Nitrosomonas europaea (strain ATCC 19718 / CIP 103999 / KCTC 2705 / NBRC 14298).